The sequence spans 68 residues: Large ribosomal subunit protein bL35 (68 aa).

It belongs to the bacterial ribosomal protein bL35 family.

This chain is Large ribosomal subunit protein bL35, found in Aster yellows witches'-broom phytoplasma (strain AYWB).